A 200-amino-acid chain; its full sequence is GTP-dependent dephospho-CoA kinase (200 aa).

Positions 56, 57, 58, 75, and 132 each coordinate GTP.

This sequence belongs to the GTP-dependent DPCK family.

The catalysed reaction is 3'-dephospho-CoA + GTP = GDP + CoA + H(+). Its pathway is cofactor biosynthesis; coenzyme A biosynthesis. Its function is as follows. Catalyzes the GTP-dependent phosphorylation of the 3'-hydroxyl group of dephosphocoenzyme A to form coenzyme A (CoA). The polypeptide is GTP-dependent dephospho-CoA kinase (Caldivirga maquilingensis (strain ATCC 700844 / DSM 13496 / JCM 10307 / IC-167)).